Reading from the N-terminus, the 156-residue chain is Small ribosomal subunit protein uS7 (156 aa).

Belongs to the universal ribosomal protein uS7 family. In terms of assembly, part of the 30S ribosomal subunit. Contacts proteins S9 and S11.

Functionally, one of the primary rRNA binding proteins, it binds directly to 16S rRNA where it nucleates assembly of the head domain of the 30S subunit. Is located at the subunit interface close to the decoding center, probably blocks exit of the E-site tRNA. This is Small ribosomal subunit protein uS7 from Ruegeria pomeroyi (strain ATCC 700808 / DSM 15171 / DSS-3) (Silicibacter pomeroyi).